Here is a 64-residue protein sequence, read N- to C-terminus: Small, acid-soluble spore protein H (64 aa).

The protein belongs to the SspH family.

It localises to the spore core. The polypeptide is Small, acid-soluble spore protein H (Acetivibrio thermocellus (strain ATCC 27405 / DSM 1237 / JCM 9322 / NBRC 103400 / NCIMB 10682 / NRRL B-4536 / VPI 7372) (Clostridium thermocellum)).